The chain runs to 206 residues: 2-oxoglutarate-dependent dioxygenase iboH (206 aa).

The Fe2OG dioxygenase domain maps to 51–157 (PSTTTLVLLH…RYSIAYFLRP (107 aa)). Residues His75, Asp77, and His134 each contribute to the Fe cation site. Residue Arg148 coordinates 2-oxoglutarate.

This sequence belongs to the iron/ascorbate-dependent oxidoreductase family. It depends on Fe(2+) as a cofactor.

It catalyses the reaction L-glutamate + 2-oxoglutarate + O2 = (3R)-3-hydroxy-L-glutamate + succinate + CO2. The protein operates within secondary metabolite biosynthesis. In terms of biological role, 2-oxoglutarate-dependent dioxygenase; part of the gene cluster that mediates the biosynthesis of the psychoactive metabolites ibotenic acid and muscimol. The first committed step is glutamate hydroxylation by the 2-oxoglutarate-dependent dioxygenase iboH, and the last step is decarboxylation of ibotenic acid to muscimol by the decarboxylase iboD. The order of the intermediate reactions is somewhat ambiguous. IboA likely activates the carboxylic acid at position 5 to introduce an amide bond, and the flavin monooxygenase iboF generates the N-O bond. There are several options for the latter step. One option is that iboF directly hydroxylates the amide nitrogen formed by iboA to produce a hydroxamic acid species. Another option is that iboF hydroxylates an external N-containing compound, whose resulting N-O bond is subsequently introduced into the hydroxyglutamate scaffold. The paralogous PLP-dependent cystathionine gamma-synthase-like enzymes iboG1 and iboG2 are likely involved in substitution of the OH group at position 3 by the O-N moiety. The first cyclic intermediate is most probably tricholomic acid which is likely desaturated to ibotenic acid by the cytochrome P450 monooxygenase iboC. This chain is 2-oxoglutarate-dependent dioxygenase iboH, found in Amanita muscaria (strain Koide BX008).